We begin with the raw amino-acid sequence, 212 residues long: FMN-dependent NADH:quinone oxidoreductase 1 (212 aa).

FMN is bound by residues Ser10, 16–18, 97–100, and 145–148; these read SHS, MYNF, and SRGG.

This sequence belongs to the azoreductase type 1 family. Homodimer. FMN serves as cofactor.

The catalysed reaction is 2 a quinone + NADH + H(+) = 2 a 1,4-benzosemiquinone + NAD(+). The enzyme catalyses N,N-dimethyl-1,4-phenylenediamine + anthranilate + 2 NAD(+) = 2-(4-dimethylaminophenyl)diazenylbenzoate + 2 NADH + 2 H(+). Its function is as follows. Quinone reductase that provides resistance to thiol-specific stress caused by electrophilic quinones. In terms of biological role, also exhibits azoreductase activity. Catalyzes the reductive cleavage of the azo bond in aromatic azo compounds to the corresponding amines. The polypeptide is FMN-dependent NADH:quinone oxidoreductase 1 (Pseudomonas fluorescens (strain Pf0-1)).